The primary structure comprises 192 residues: 3-hydroxyanthranilate 3,4-dioxygenase 1 (192 aa).

Arg50 is an O2 binding site. Fe cation is bound by residues His54, Glu60, and His102. Glu60 lines the substrate pocket. Residues Arg106 and Glu116 each coordinate substrate. Residues Cys131, Cys134, Cys168, and Cys171 each contribute to the a divalent metal cation site.

Belongs to the 3-HAO family. Fe(2+) is required as a cofactor.

Its subcellular location is the cytoplasm. It carries out the reaction 3-hydroxyanthranilate + O2 = (2Z,4Z)-2-amino-3-carboxymuconate 6-semialdehyde. It functions in the pathway cofactor biosynthesis; NAD(+) biosynthesis; quinolinate from L-kynurenine: step 3/3. Its function is as follows. Catalyzes the oxidative ring opening of 3-hydroxyanthranilate to 2-amino-3-carboxymuconate semialdehyde, which spontaneously cyclizes to quinolinate. This Aspergillus fumigatus (strain CBS 144.89 / FGSC A1163 / CEA10) (Neosartorya fumigata) protein is 3-hydroxyanthranilate 3,4-dioxygenase 1 (bna1-1).